Here is a 205-residue protein sequence, read N- to C-terminus: Ribosomal RNA small subunit methyltransferase G (205 aa).

Residues Gly-76, Leu-81, 127–128 (IE), and Arg-140 contribute to the S-adenosyl-L-methionine site.

The protein belongs to the methyltransferase superfamily. RNA methyltransferase RsmG family.

It is found in the cytoplasm. The catalysed reaction is guanosine(527) in 16S rRNA + S-adenosyl-L-methionine = N(7)-methylguanosine(527) in 16S rRNA + S-adenosyl-L-homocysteine. In terms of biological role, specifically methylates the N7 position of guanine in position 527 of 16S rRNA. The chain is Ribosomal RNA small subunit methyltransferase G from Francisella tularensis subsp. tularensis (strain FSC 198).